Consider the following 380-residue polypeptide: Chorismate synthase (380 aa).

Arg-47 contacts NADP(+). Residues 124–126 (RSS), Gly-288, 303–307 (KPTST), and Arg-329 each bind FMN.

It belongs to the chorismate synthase family. As to quaternary structure, homotetramer. Requires FMNH2 as cofactor.

The catalysed reaction is 5-O-(1-carboxyvinyl)-3-phosphoshikimate = chorismate + phosphate. Its pathway is metabolic intermediate biosynthesis; chorismate biosynthesis; chorismate from D-erythrose 4-phosphate and phosphoenolpyruvate: step 7/7. Catalyzes the anti-1,4-elimination of the C-3 phosphate and the C-6 proR hydrogen from 5-enolpyruvylshikimate-3-phosphate (EPSP) to yield chorismate, which is the branch point compound that serves as the starting substrate for the three terminal pathways of aromatic amino acid biosynthesis. This reaction introduces a second double bond into the aromatic ring system. This Leptospira interrogans serogroup Icterohaemorrhagiae serovar copenhageni (strain Fiocruz L1-130) protein is Chorismate synthase.